An 81-amino-acid chain; its full sequence is Styelin-D (81 aa).

Residues 1-22 (MQMKATILIVLVALFMIQQSEA) form the signal peptide. W24 carries the 6'-bromotryptophan modification. Position 26 is a 3,4-dihydroxyarginine (R26). Residues K27, K30, and K34 each carry the 4,5-dihydroxylysine modification. 3',4'-dihydroxyphenylalanine occurs at positions 36 and 37. K38 bears the 4,5-dihydroxylysine mark. K40 is subject to 5-hydroxylysine. 3',4'-dihydroxyphenylalanine occurs at positions 41 and 42. 5-hydroxylysine is present on K44. L54 is subject to Leucine amide. The propeptide at 56-81 (DMTDEEFQDFMKEVEQAREEELQSRQ) is removed in mature form.

In terms of processing, contains L-DOPA (3',4'-dihydroxyphenylalanine). Hemocytes and pharyngeal tissues.

It localises to the secreted. Functionally, bactericidal against several Gram-positive and Gram-negative bacteria. Plays a significant role in the innate immune mechanisms of S.clava. This Styela clava (Sea squirt) protein is Styelin-D.